Here is a 369-residue protein sequence, read N- to C-terminus: Serpentine receptor class epsilon-2 (369 aa).

Over 1-20 the chain is Extracellular; that stretch reads MLIQYHKISNNDPNRIQLLS. The helical transmembrane segment at 21 to 41 threads the bilayer; that stretch reads MIFCEIILLIFELFEFAAIIF. Topologically, residues 42-55 are cytoplasmic; sequence NMSRYQFHFNLKVV. The chain crosses the membrane as a helical span at residues 56 to 76; it reads VGYAIFAYWFDIIARITIAFF. Topologically, residues 77 to 118 are extracellular; it reads EIGLFNLDDQTIAVETEKLPWNYKNMFFMLLFCCSTYRVYFM. Residues 119 to 139 form a helical membrane-spanning segment; the sequence is FLICSVTLLLAVERFLATIWV. The Cytoplasmic segment spans residues 140 to 148; sequence STYESVQHK. A helical membrane pass occupies residues 149 to 169; the sequence is WVSIVLTSTNSIAGIFGSLLF. Topologically, residues 170–178 are extracellular; sequence HYELIFDTA. Residues 179–199 form a helical membrane-spanning segment; it reads VWCSLGLCFNFVSIFLYVILF. Residues 200-234 are Cytoplasmic-facing; that stretch reads NSNKSKIELCQTREITQSYTLSLRFQLNENLKIMN. A helical membrane pass occupies residues 235–255; it reads WIKNSILVVTCFNTLLAGFLI. At 256–274 the chain is on the extracellular side; sequence ASNNEYLKNDYPVLVKCCH. The chain crosses the membrane as a helical span at residues 275–295; the sequence is TFLNLGIAIYAQVVFFVAILA. Residues 296-369 are Cytoplasmic-facing; it reads DRHFRTYFLR…VAKKKRFWRV (74 aa).

This sequence belongs to the nematode receptor-like protein sre family.

The protein resides in the cell membrane. The chain is Serpentine receptor class epsilon-2 (sre-2) from Caenorhabditis elegans.